Here is a 614-residue protein sequence, read N- to C-terminus: 2-succinyl-5-enolpyruvyl-6-hydroxy-3-cyclohexene-1-carboxylate synthase (614 aa).

This sequence belongs to the TPP enzyme family. MenD subfamily. As to quaternary structure, homodimer. The cofactor is Mg(2+). Mn(2+) is required as a cofactor. Thiamine diphosphate serves as cofactor.

It carries out the reaction isochorismate + 2-oxoglutarate + H(+) = 5-enolpyruvoyl-6-hydroxy-2-succinyl-cyclohex-3-ene-1-carboxylate + CO2. It participates in quinol/quinone metabolism; 1,4-dihydroxy-2-naphthoate biosynthesis; 1,4-dihydroxy-2-naphthoate from chorismate: step 2/7. The protein operates within quinol/quinone metabolism; menaquinone biosynthesis. In terms of biological role, catalyzes the thiamine diphosphate-dependent decarboxylation of 2-oxoglutarate and the subsequent addition of the resulting succinic semialdehyde-thiamine pyrophosphate anion to isochorismate to yield 2-succinyl-5-enolpyruvyl-6-hydroxy-3-cyclohexene-1-carboxylate (SEPHCHC). The sequence is that of 2-succinyl-5-enolpyruvyl-6-hydroxy-3-cyclohexene-1-carboxylate synthase from Sorangium cellulosum (strain So ce56) (Polyangium cellulosum (strain So ce56)).